Consider the following 428-residue polypeptide: L-glutamyl-[BtrI acyl-carrier protein] decarboxylase (428 aa).

Lys49 bears the N6-(pyridoxal phosphate)lysine mark. Pyridoxal 5'-phosphate contacts are provided by residues Gly228, Glu269–Arg272, and Tyr375. The substrate site is built by Arg272 and Tyr375.

The protein belongs to the Orn/Lys/Arg decarboxylase class-II family. As to quaternary structure, homodimer. Requires pyridoxal 5'-phosphate as cofactor.

It catalyses the reaction gamma-L-glutamyl-[BtrI ACP] + H(+) = 4-aminobutanoyl-[BtrI ACP] + CO2. It functions in the pathway antibiotic biosynthesis; butirosin biosynthesis. Pyridoxal phosphate-dependent decarboxylase that catalyzes 1 step in the biosynthesis of the side chain of the aminoglycoside antibiotics in the biosynthetic pathway of butirosin. Able to decarboxylate L-ornithine, L-arginine, L-lysine, but not L-glutamate or any D-amino acids. Has low activity with substrates not bound to an acyl-carrier protein. The protein is L-glutamyl-[BtrI acyl-carrier protein] decarboxylase (btrK) of Niallia circulans (Bacillus circulans).